Consider the following 209-residue polypeptide: FMN-dependent NADH:quinone oxidoreductase (209 aa).

FMN-binding positions include serine 9, 19 to 21, and 143 to 146; these read SVS and TRGG.

It belongs to the azoreductase type 1 family. In terms of assembly, homodimer. Requires FMN as cofactor.

It carries out the reaction 2 a quinone + NADH + H(+) = 2 a 1,4-benzosemiquinone + NAD(+). It catalyses the reaction N,N-dimethyl-1,4-phenylenediamine + anthranilate + 2 NAD(+) = 2-(4-dimethylaminophenyl)diazenylbenzoate + 2 NADH + 2 H(+). Quinone reductase that provides resistance to thiol-specific stress caused by electrophilic quinones. In terms of biological role, also exhibits azoreductase activity. Catalyzes the reductive cleavage of the azo bond in aromatic azo compounds to the corresponding amines. In Leptothrix cholodnii (strain ATCC 51168 / LMG 8142 / SP-6) (Leptothrix discophora (strain SP-6)), this protein is FMN-dependent NADH:quinone oxidoreductase.